We begin with the raw amino-acid sequence, 684 residues long: Dipeptidyl-peptidase 5 (684 aa).

The N-terminal stretch at 1–24 (MNKKIFSMMAASIIGSAAMTPSAG) is a signal peptide. 3 WD repeats span residues 87-127 (DTES…TERR), 220-259 (KPWS…DIYI), and 323-363 (TFDY…GKIR). Catalysis depends on charge relay system residues Ser-542, Asp-627, and His-659.

It belongs to the peptidase S9C family. As to quaternary structure, homodimer.

The protein resides in the periplasm. Catalyzes the removal of dipeptides from the N-terminus of oligopeptides. Prefers Ala and hydrophobic residues except Pro at the P1 position, and has no preference for P2 residues. Shows high dipeptidyl peptidase activity toward the synthetic substrates Lys-Ala-, Gly-Phe-, Met-Leu-, and Ser-Tyr-methylcoumaryl-7-amide (MCA), and slowly hydrolyzes Val-Tyr-MCA. Is likely involved in amino acid metabolism and bacterial growth of asaccharolytic P.gingivalis, that utilizes amino acids from extracellular proteinaceous nutrients as energy and carbon sources. This chain is Dipeptidyl-peptidase 5, found in Porphyromonas gingivalis (strain ATCC 33277 / DSM 20709 / CIP 103683 / JCM 12257 / NCTC 11834 / 2561).